A 95-amino-acid chain; its full sequence is Co-chaperonin GroES (95 aa).

Belongs to the GroES chaperonin family. In terms of assembly, heptamer of 7 subunits arranged in a ring. Interacts with the chaperonin GroEL.

The protein resides in the cytoplasm. Functionally, together with the chaperonin GroEL, plays an essential role in assisting protein folding. The GroEL-GroES system forms a nano-cage that allows encapsulation of the non-native substrate proteins and provides a physical environment optimized to promote and accelerate protein folding. GroES binds to the apical surface of the GroEL ring, thereby capping the opening of the GroEL channel. The polypeptide is Co-chaperonin GroES (Alkalilimnicola ehrlichii (strain ATCC BAA-1101 / DSM 17681 / MLHE-1)).